A 289-amino-acid chain; its full sequence is F-box protein PP2-B15 (289 aa).

Residues 1–43 (MMLPEACVATILSFTTPADTISSAAVSSVFRVAGDSDFVWEKF) form the F-box domain.

The sequence is that of F-box protein PP2-B15 (PP2B15) from Arabidopsis thaliana (Mouse-ear cress).